The following is a 696-amino-acid chain: MIDQNKHQQLRIGLASPEQICAWSEKILPNGEIVGQVTKPHTLHYETNKPERDGSFCERIFGPIKSGVCSCGNSPGIGNEKIDAKFCTQCGVEFVDSRIRRYQMGYIKLACPVVHVWYLKRLPSYIANLLAKTRKELEGPVYCDLFLARPIANKPTLLRSRGTFDYEIQSWREIIPHYLSARPYYLFPRGSGTFKEREIATGGDAIGKQLMGLDLQMIIDRSHMEWKNLVELKWNRLEENQESTVDRWEDEKIRRRKDFLVGRMKLAKHFLRTNIEPKWMVLCLLPVLPPEPRPIVQLGEGGLITSSDLNELYRRVINRNNTLTNLLARSGSESFVIYQTKLIQEAVDALLDNGICRQPMRDSHNRPYKSFSDVIEGKEGRFRENLLGKRVDYSGRSVIVVGPFLSLYQCGLPSEIAIELFQAFLIRSLIGRHIAPNLRTAKSMIRDKGPIVWEVLQEVMQGHPILLNRAPTLHKLGIQAFQPILVEGRAIRLHPSVCGGFNADFDGDQMAVHVPLSLEARAEARLLMFSETNLLSPAIGDPISIPTQDMLLGLYISTVQNSQGIYGNRYHPYHSENKSFSCKKPSFYSYDDVLRAYRQKRIDLYSPLWLRWGEVDLRIITSVNQEAPIEVQYESLGTFHEIHEHYRIRKGRMGEILNIYIRTTVGRTRFNREMEEAIQGFACSEHPNKSLPALRI.

Positions 69, 71, 87, and 90 each coordinate Zn(2+). Mg(2+) contacts are provided by Asp504, Asp506, and Asp508.

It belongs to the RNA polymerase beta' chain family. RpoC1 subfamily. In plastids the minimal PEP RNA polymerase catalytic core is composed of four subunits: alpha, beta, beta', and beta''. When a (nuclear-encoded) sigma factor is associated with the core the holoenzyme is formed, which can initiate transcription. Mg(2+) is required as a cofactor. Zn(2+) serves as cofactor.

It is found in the plastid. The protein localises to the chloroplast. It catalyses the reaction RNA(n) + a ribonucleoside 5'-triphosphate = RNA(n+1) + diphosphate. Its function is as follows. DNA-dependent RNA polymerase catalyzes the transcription of DNA into RNA using the four ribonucleoside triphosphates as substrates. The protein is DNA-directed RNA polymerase subunit beta' of Pinus thunbergii (Japanese black pine).